The following is a 285-amino-acid chain: MIIESRIEKGKPVVGMETTVFVHGLPRKEAIELFRRAKEISREKGFQLAVIGILKGKIVAGMSEEELEAMMREGADKVGTREIPIVVAEGKNAATTVSATIFLSRRIGIEVVVTGGTGGVHPGRVDVSQDLTEMSSSRAILVSSGIKSILDVEATFEMLETLEIPLIGFRTDEFPLFFSRKSGRRVPRVENVEEVLKIYETMKEIELEKTLMVLNPVPEEYEVPHDEIERLLEKIELEVEGKEVTPFLLKKLVEMTNGRTLKANLALLEENVKLAGEIAVKLKRS.

Glu17 functions as the Proton donor in the catalytic mechanism. Residues Lys77 and Val97 each contribute to the substrate site. Asp126 lines the Mn(2+) pocket. Ser128–Asp130 contacts substrate. Lys147 functions as the Nucleophile in the catalytic mechanism.

The protein belongs to the pseudouridine-5'-phosphate glycosidase family. In terms of assembly, homotrimer. Mn(2+) is required as a cofactor.

It catalyses the reaction D-ribose 5-phosphate + uracil = psi-UMP + H2O. Catalyzes the reversible cleavage of pseudouridine 5'-phosphate (PsiMP) to ribose 5-phosphate and uracil. Functions biologically in the cleavage direction, as part of a pseudouridine degradation pathway. This is Pseudouridine-5'-phosphate glycosidase from Thermotoga sp. (strain RQ2).